The sequence spans 294 residues: Protein ATC1/LIC4 (294 aa).

A disordered region spans residues 114–178 (YTGKASLDKS…SSSLASSDAN (65 aa)). The span at 130–145 (HKPDKEQKNYKIDKPT) shows a compositional bias: basic and acidic residues. The segment covering 153–175 (LKTTNEPMLSPASLSPSSSLASS) has biased composition (low complexity).

Its subcellular location is the cytoplasm. The protein resides in the nucleus. Its function is as follows. Involved in cation homeostasis and in the regulation of the cation stress signaling cascades. Also involved in bipolar budding. The chain is Protein ATC1/LIC4 (ATC1) from Saccharomyces cerevisiae (strain ATCC 204508 / S288c) (Baker's yeast).